The chain runs to 279 residues: Putative carbamate hydrolase RutD (279 aa).

The region spanning 23–126 (PVVVLISGLG…LVSVNGWLRI (104 aa)) is the AB hydrolase-1 domain.

The protein belongs to the AB hydrolase superfamily. Hydrolase RutD family.

It carries out the reaction carbamate + 2 H(+) = NH4(+) + CO2. Involved in pyrimidine catabolism. May facilitate the hydrolysis of carbamate, a reaction that can also occur spontaneously. This chain is Putative carbamate hydrolase RutD, found in Escherichia coli O17:K52:H18 (strain UMN026 / ExPEC).